Consider the following 58-residue polypeptide: Large ribosomal subunit protein bL32 (58 aa).

This sequence belongs to the bacterial ribosomal protein bL32 family.

The protein is Large ribosomal subunit protein bL32 of Caldicellulosiruptor bescii (strain ATCC BAA-1888 / DSM 6725 / KCTC 15123 / Z-1320) (Anaerocellum thermophilum).